The sequence spans 466 residues: tRNA-2-methylthio-N(6)-dimethylallyladenosine synthase (466 aa).

Positions 5–125 constitute an MTTase N-terminal domain; the sequence is RKLHIKSYGC…LPELLARAGR (121 aa). 6 residues coordinate [4Fe-4S] cluster: cysteine 14, cysteine 50, cysteine 88, cysteine 166, cysteine 170, and cysteine 173. The 233-residue stretch at 152–384 folds into the Radical SAM core domain; it reads RARGVSAFVT…QSLIDSQQAA (233 aa). The TRAM domain occupies 387-449; the sequence is KAAIGTVVDV…RYSLLGELVA (63 aa).

Belongs to the methylthiotransferase family. MiaB subfamily. As to quaternary structure, monomer. Requires [4Fe-4S] cluster as cofactor.

The protein resides in the cytoplasm. It catalyses the reaction N(6)-dimethylallyladenosine(37) in tRNA + (sulfur carrier)-SH + AH2 + 2 S-adenosyl-L-methionine = 2-methylsulfanyl-N(6)-dimethylallyladenosine(37) in tRNA + (sulfur carrier)-H + 5'-deoxyadenosine + L-methionine + A + S-adenosyl-L-homocysteine + 2 H(+). In terms of biological role, catalyzes the methylthiolation of N6-(dimethylallyl)adenosine (i(6)A), leading to the formation of 2-methylthio-N6-(dimethylallyl)adenosine (ms(2)i(6)A) at position 37 in tRNAs that read codons beginning with uridine. This chain is tRNA-2-methylthio-N(6)-dimethylallyladenosine synthase, found in Bradyrhizobium sp. (strain BTAi1 / ATCC BAA-1182).